Here is a 238-residue protein sequence, read N- to C-terminus: 1-(5-phosphoribosyl)-5-[(5-phosphoribosylamino)methylideneamino] imidazole-4-carboxamide isomerase (238 aa).

Aspartate 8 acts as the Proton acceptor in catalysis. Aspartate 129 serves as the catalytic Proton donor.

The protein belongs to the HisA/HisF family.

The protein resides in the cytoplasm. It carries out the reaction 1-(5-phospho-beta-D-ribosyl)-5-[(5-phospho-beta-D-ribosylamino)methylideneamino]imidazole-4-carboxamide = 5-[(5-phospho-1-deoxy-D-ribulos-1-ylimino)methylamino]-1-(5-phospho-beta-D-ribosyl)imidazole-4-carboxamide. Its pathway is amino-acid biosynthesis; L-histidine biosynthesis; L-histidine from 5-phospho-alpha-D-ribose 1-diphosphate: step 4/9. In Anaeromyxobacter dehalogenans (strain 2CP-C), this protein is 1-(5-phosphoribosyl)-5-[(5-phosphoribosylamino)methylideneamino] imidazole-4-carboxamide isomerase.